Consider the following 515-residue polypeptide: Arabinose import ATP-binding protein AraG 2 (515 aa).

Residues 1–22 are disordered; it reads MTMQTMTAASGHDAEAGTPPDG. 2 ABC transporter domains span residues 25–260 and 260–511; these read LALD…MVGR and RSIE…LIKL. 57 to 64 is a binding site for ATP; sequence GENGAGKS.

Belongs to the ABC transporter superfamily. Arabinose importer (TC 3.A.1.2.2) family. As to quaternary structure, the complex is composed of two ATP-binding proteins (AraG), two transmembrane proteins (AraH) and a solute-binding protein (AraF).

Its subcellular location is the cell inner membrane. The enzyme catalyses L-arabinose(out) + ATP + H2O = L-arabinose(in) + ADP + phosphate + H(+). Functionally, part of the ABC transporter complex AraFGH involved in arabinose import. Responsible for energy coupling to the transport system. In Burkholderia cenocepacia (strain HI2424), this protein is Arabinose import ATP-binding protein AraG 2.